The chain runs to 450 residues: Glutamate-1-semialdehyde 2,1-aminomutase (450 aa).

Lysine 262 carries the N6-(pyridoxal phosphate)lysine modification.

It belongs to the class-III pyridoxal-phosphate-dependent aminotransferase family. HemL subfamily. As to quaternary structure, homodimer. Pyridoxal 5'-phosphate is required as a cofactor.

It localises to the cytoplasm. The catalysed reaction is (S)-4-amino-5-oxopentanoate = 5-aminolevulinate. The protein operates within porphyrin-containing compound metabolism; protoporphyrin-IX biosynthesis; 5-aminolevulinate from L-glutamyl-tRNA(Glu): step 2/2. The polypeptide is Glutamate-1-semialdehyde 2,1-aminomutase (Campylobacter hominis (strain ATCC BAA-381 / DSM 21671 / CCUG 45161 / LMG 19568 / NCTC 13146 / CH001A)).